A 397-amino-acid chain; its full sequence is Troponin T, skeletal muscle (397 aa).

Over residues 1-16 the composition is skewed to acidic residues; that stretch reads MSDDEEYTSSEEEEVV. Disordered stretches follow at residues 1-148, 234-261, and 294-397; these read MSDD…NFTI, ERQK…YPPK, and DSNE…EEEE. Basic and acidic residues-rich tracts occupy residues 37–77, 84–129, and 136–148; these read EFIK…LKEK, TRAE…EKKR, and MKDK…NFTI. Basic and acidic residues-rich tracts occupy residues 294–307 and 319–329; these read DSNE…KEQY and FGERPGKKAGE. Residues 331 to 397 are compositionally biased toward acidic residues; sequence ETPEGEEDAK…EEEEEEEEEE (67 aa).

The protein belongs to the troponin T family. Post-translationally, some glutamate residues are polyglycylated by TTLL3B. This modification occurs exclusively on glutamate residues and results in polyglycine chains on the gamma-carboxyl group. Isoform 3 is expressed in the hypoderm. Isoform 8 is expressed in the dorsal vessel. Isoform 6 is expressed in adult TDT muscle and isoform 9 in adult IFM, flight and jump muscles.

Troponin T is the tropomyosin-binding subunit of troponin, the thin filament regulatory complex which confers calcium-sensitivity to striated muscle actomyosin ATPase activity. The polypeptide is Troponin T, skeletal muscle (up) (Drosophila melanogaster (Fruit fly)).